A 684-amino-acid polypeptide reads, in one-letter code: Glycine--tRNA ligase beta subunit (684 aa).

This sequence belongs to the class-II aminoacyl-tRNA synthetase family. Tetramer of two alpha and two beta subunits.

The protein localises to the cytoplasm. The enzyme catalyses tRNA(Gly) + glycine + ATP = glycyl-tRNA(Gly) + AMP + diphosphate. The chain is Glycine--tRNA ligase beta subunit from Pseudomonas aeruginosa (strain UCBPP-PA14).